Consider the following 857-residue polypeptide: Facilitated trehalose transporter Tret1-1 (857 aa).

Disordered stretches follow at residues 1 to 27 and 92 to 203; these read MSGRDNRGAGGGGGGHQPLSNAMGKLK and SFRP…KATS. The Cytoplasmic portion of the chain corresponds to 1-392; sequence MSGRDNRGAG…VYRPTTNPIY (392 aa). The span at 134 to 143 shows a compositional bias: basic and acidic residues; it reads EIREHRDRQQ. Residues 171-181 show a composition bias toward polar residues; it reads GNSNTNSNKAA. Residues Ser-248, Ser-249, Ser-250, Ser-320, and Ser-322 each carry the phosphoserine modification. Positions 327–346 are disordered; the sequence is LTSRQHFQQQRSISTDSRKS. Positions 330-341 are enriched in polar residues; that stretch reads RQHFQQQRSIST. Residues 393 to 413 form a helical membrane-spanning segment; the sequence is IWTQVLAALSVSLGSLVVGFV. The Extracellular segment spans residues 414 to 440; it reads SAYTSPALVSMTDRNITSFEVTQDAGS. A glycan (N-linked (GlcNAc...) asparagine) is linked at Asn-428. A helical transmembrane segment spans residues 441–461; it reads WVGGIMPLAALAGGITGGPLI. Residues 462-473 are Cytoplasmic-facing; the sequence is EYLGRRNTILAT. Residues 474 to 494 traverse the membrane as a helical segment; sequence AVPFIVSSLLIACAVNVAMVL. Residues 495–497 lie on the Extracellular side of the membrane; that stretch reads CGR. Residues 498 to 518 traverse the membrane as a helical segment; it reads FLAGFCVGIASLSLPVYLGET. The Cytoplasmic portion of the chain corresponds to 519 to 528; it reads VQPEVRGTLG. A helical membrane pass occupies residues 529–549; that stretch reads LLPTAFGNIGILLCFVAGSFM. Asn-550 carries N-linked (GlcNAc...) asparagine glycosylation. Over 550–552 the chain is Extracellular; that stretch reads NWS. The chain crosses the membrane as a helical span at residues 553 to 573; that stretch reads MLAFLGAALPVPFLILMFLIP. Residues 574–636 lie on the Cytoplasmic side of the membrane; sequence ETPRWFVGRG…ELLKLNNLKP (63 aa). A helical membrane pass occupies residues 637–657; it reads LSISLGLMFFQQFSGINAVIF. Residues 658–673 lie on the Extracellular side of the membrane; sequence YTVQIFKDAGSTIDGN. The helical transmembrane segment at 674-694 threads the bilayer; it reads LCTIIVGIVNFLATFIGIVLI. Residues 695–700 lie on the Cytoplasmic side of the membrane; it reads DRAGRK. The helical transmembrane segment at 701–721 threads the bilayer; sequence ILLYVSDIAMVLTLFVLGGFF. At 722 to 740 the chain is on the extracellular side; that stretch reads YCKANGPDVSHLGWLPLTC. Residues 741 to 761 form a helical membrane-spanning segment; the sequence is FVIYILGFSLGFGPIPWLMMG. The Cytoplasmic segment spans residues 762–767; the sequence is EILPAK. Residues 768 to 788 form a helical membrane-spanning segment; the sequence is IRGSAASVATAFNWFCTFVVT. The Extracellular segment spans residues 789-801; that stretch reads KTFQDLTVAMGAH. A helical transmembrane segment spans residues 802–822; the sequence is GAFWLFGAICFVGLFFVIIYV. The Cytoplasmic portion of the chain corresponds to 823-857; sequence PETQGKTLEDIERKMMGRVRRMSSVANIKPLSFNM. A phosphoserine mark is found at Ser-845 and Ser-846.

Belongs to the major facilitator superfamily. Sugar transporter (TC 2.A.1.1) family. Trehalose transporter subfamily.

The protein localises to the cell membrane. Functionally, low-capacity facilitative transporter for trehalose. Does not transport maltose, sucrose or lactose. Mediates the bidirectional transfer of trehalose. Responsible for the transport of trehalose synthesized in the fat body and the incorporation of trehalose into other tissues that require a carbon source, thereby regulating trehalose levels in the hemolymph. This Drosophila sechellia (Fruit fly) protein is Facilitated trehalose transporter Tret1-1.